Reading from the N-terminus, the 492-residue chain is Proline--tRNA ligase (492 aa).

The protein belongs to the class-II aminoacyl-tRNA synthetase family. ProS type 3 subfamily. As to quaternary structure, homodimer.

The protein localises to the cytoplasm. It carries out the reaction tRNA(Pro) + L-proline + ATP = L-prolyl-tRNA(Pro) + AMP + diphosphate. In terms of biological role, catalyzes the attachment of proline to tRNA(Pro) in a two-step reaction: proline is first activated by ATP to form Pro-AMP and then transferred to the acceptor end of tRNA(Pro). The chain is Proline--tRNA ligase from Christiangramia forsetii (strain DSM 17595 / CGMCC 1.15422 / KT0803) (Gramella forsetii).